We begin with the raw amino-acid sequence, 457 residues long: uncharacterized protein (457 aa).

Residues 6–64 (PVHKGEVLDVTIMDLTYQGMGVAKVDNYPIFIENALPEEKITVKVTKTTKNFAFGDVEK) enclose the TRAM domain. S-adenosyl-L-methionine is bound by residues Gln-287, Tyr-316, Glu-337, and Asp-385. Residue Cys-412 is the Nucleophile of the active site.

This sequence belongs to the class I-like SAM-binding methyltransferase superfamily. RNA M5U methyltransferase family.

This is an uncharacterized protein from Lactiplantibacillus plantarum (strain ATCC BAA-793 / NCIMB 8826 / WCFS1) (Lactobacillus plantarum).